A 444-amino-acid polypeptide reads, in one-letter code: Dihydroorotate dehydrogenase (quinone), mitochondrial (444 aa).

Residues 34–56 form a helical membrane-spanning segment; sequence GGASRYIIGTASVLVGAMAGFYI. FMN contacts are provided by residues 124–128 and threonine 148; that span reads AGLDK. Lysine 128 contacts substrate. 173–177 provides a ligand contact to substrate; that stretch reads NRYGF. Asparagine 220 and asparagine 250 together coordinate FMN. 250 to 255 is a binding site for substrate; sequence NVSSPN. The active-site Nucleophile is the serine 253. FMN is bound by residues lysine 301 and serine 329. Substrate is bound at residue 330–331; it reads NT. Residues glycine 355, glycine 385, and 406–407 contribute to the FMN site; that span reads YT.

This sequence belongs to the dihydroorotate dehydrogenase family. Type 2 subfamily. Requires FMN as cofactor.

It localises to the mitochondrion inner membrane. The catalysed reaction is (S)-dihydroorotate + a quinone = orotate + a quinol. It participates in pyrimidine metabolism; UMP biosynthesis via de novo pathway; orotate from (S)-dihydroorotate (quinone route): step 1/1. Catalyzes the conversion of dihydroorotate to orotate with quinone as electron acceptor. In Eremothecium gossypii (strain ATCC 10895 / CBS 109.51 / FGSC 9923 / NRRL Y-1056) (Yeast), this protein is Dihydroorotate dehydrogenase (quinone), mitochondrial (URA9).